Here is a 130-residue protein sequence, read N- to C-terminus: Glycine cleavage system H protein (130 aa).

One can recognise a Lipoyl-binding domain in the interval 28–110; sequence TVRIGITSVA…FGEGWLFEVE (83 aa). An N6-lipoyllysine modification is found at lysine 69.

The protein belongs to the GcvH family. In terms of assembly, the glycine cleavage system is composed of four proteins: P, T, L and H. Requires (R)-lipoate as cofactor.

The glycine cleavage system catalyzes the degradation of glycine. The H protein shuttles the methylamine group of glycine from the P protein to the T protein. The protein is Glycine cleavage system H protein of Corynebacterium aurimucosum (strain ATCC 700975 / DSM 44827 / CIP 107346 / CN-1) (Corynebacterium nigricans).